A 647-amino-acid polypeptide reads, in one-letter code: LIM domain kinase 1 (647 aa).

LIM zinc-binding domains follow at residues 25–75 (CASC…CKKD) and 84–137 (CHGC…CGQC). The PDZ domain maps to 165-258 (LVSIPASAHG…LLQLTLEHDP (94 aa)). Phosphoserine is present on Ser-210. Position 229 is a phosphothreonine (Thr-229). Positions 256 to 319 (HDPHDSLGHG…SPASQRKDLG (64 aa)) are disordered. The segment covering 266-277 (PVSDPSPLSSPV) has biased composition (low complexity). 2 stretches are compositionally biased toward polar residues: residues 278-289 (HTPSGQAASSAR) and 298-313 (SIDTSPGTSSLASPAS). Phosphoserine is present on residues Ser-298, Ser-302, Ser-307, and Ser-310. Phosphoserine; by MAPKAPK2 is present on Ser-323. Residue Ser-337 is modified to Phosphoserine. Residues 339–604 (LIHGEVLGKG…PSFVKLEQWL (266 aa)) enclose the Protein kinase domain. Residues 345-353 (LGKGCFGQA) and Lys-368 contribute to the ATP site. Residue Asp-460 is part of the active site. Phosphothreonine; by ROCK1 is present on Thr-508.

It belongs to the protein kinase superfamily. TKL Ser/Thr protein kinase family. In terms of assembly, self-associates to form homodimers. Interacts with HSP90AA1; this interaction promotes LIMK1 dimerization and subsequent transphosphorylation. Interacts with CDKN1C. Interacts (via LIM domain) with the cytoplasmic domain of NRG1. Interacts with NISCH. Interacts with SSH1. Interacts with RLIM and RNF6. Interacts (via LIM zinc-binding domains) with FAM89B/LRAP25 (via LRR repeat). Forms a tripartite complex with CDC42BPA, CDC42BPB and FAM89B/LRAP25. Post-translationally, autophosphorylated. Phosphorylated on Thr-508 by ROCK1 and PAK1, resulting in activation. Phosphorylated by PAK4 which increases the ability of LIMK1 to phosphorylate cofilin. Phosphorylated at Ser-323 by MAPKAPK2 during activation of VEGFA-induced signaling, which results in activation of LIMK1 and promotion of actin reorganization, cell migration, and tubule formation of endothelial cells. Dephosphorylated and inactivated by SSH1. Phosphorylated by CDC42BP. Ubiquitinated. 'Lys-48'-linked polyubiquitination by RNF6 leads to proteasomal degradation through the 26S proteasome, modulating LIMK1 levels in the growth cone and its effect on axonal outgrowth. Also polyubiquitinated by RLIM. In terms of tissue distribution, highest expression in the nervous system, particularly in the spinal cord and the cranial nerve and dorsal root ganglia.

The protein localises to the cytoplasm. The protein resides in the nucleus. Its subcellular location is the cytoskeleton. It localises to the cell projection. It is found in the lamellipodium. The catalysed reaction is L-seryl-[protein] + ATP = O-phospho-L-seryl-[protein] + ADP + H(+). It carries out the reaction L-threonyl-[protein] + ATP = O-phospho-L-threonyl-[protein] + ADP + H(+). In terms of biological role, serine/threonine-protein kinase that plays an essential role in the regulation of actin filament dynamics. Acts downstream of several Rho family GTPase signal transduction pathways. Activated by upstream kinases including ROCK1, PAK1 and PAK4, which phosphorylate LIMK1 on a threonine residue located in its activation loop. LIMK1 subsequently phosphorylates and inactivates the actin binding/depolymerizing factors cofilin-1/CFL1, cofilin-2/CFL2 and destrin/DSTN, thereby preventing the cleavage of filamentous actin (F-actin), and stabilizing the actin cytoskeleton. In this way LIMK1 regulates several actin-dependent biological processes including cell motility, cell cycle progression, and differentiation. Phosphorylates TPPP on serine residues, thereby promoting microtubule disassembly. Stimulates axonal outgrowth and may be involved in brain development. This is LIM domain kinase 1 (Limk1) from Mus musculus (Mouse).